A 1233-amino-acid polypeptide reads, in one-letter code: uncharacterized protein (1233 aa).

Disordered regions lie at residues 1–39 (MVES…PSTN), 65–116 (QELS…DAIS), 160–211 (AEGT…TDLS), 250–577 (EKMD…DAPR), 594–825 (DLEV…NSEK), 851–872 (NKEN…NSEK), and 902–955 (EDVE…ENSK). Residues 72 to 83 (KSSKLKGHKKKN) show a composition bias toward basic residues. Serine 180 bears the Phosphoserine mark. Residues 183–199 (TRRKKNKKKKTTNRRGR) are compositionally biased toward basic residues. Over residues 201–211 (SSNPADTTDLS) the composition is skewed to polar residues. Composition is skewed to basic and acidic residues over residues 250–280 (EKMD…ETSS) and 287–300 (NEEK…REEN). The segment covering 329 to 345 (GQASTKDVESESLTKNG) has biased composition (polar residues). Basic and acidic residues-rich tracts occupy residues 349–370 (KENE…DRDG) and 379–408 (NQKE…ELSV). Residues 409–422 (NHENNMSHNFNAAG) show a composition bias toward polar residues. Position 462 is a phosphoserine (serine 462). Over residues 466-478 (EKEEEEEEEEEEN) the composition is skewed to acidic residues. 5 stretches are compositionally biased toward basic and acidic residues: residues 484–497 (VKKE…EAVR), 508–527 (STSK…EAGE), 594–622 (DLEV…DKIA), 631–672 (EDMK…KTPE), and 684–711 (RPED…DVKP). Serine 523 bears the Phosphoserine mark. Over residues 728 to 739 (QRVQISTEQAET) the composition is skewed to polar residues. Residues 753–783 (FKEEEKPKRFEITQEGDKITGKDTNHEHGEA) are compositionally biased toward basic and acidic residues. Acidic residues predominate over residues 855–868 (EDVEVDTEEDAEVE). Residue threonine 861 is modified to Phosphothreonine. Basic and acidic residues-rich tracts occupy residues 910-920 (SKEDIETKCSE) and 935-948 (EVSK…TKED). At serine 975 the chain carries Phosphoserine. 2 disordered regions span residues 984–1071 (LPEL…PKKA) and 1109–1128 (KDST…KPQD). Residues 986-999 (ELEKQDIKDNKGED) show a composition bias toward basic and acidic residues. 2 positions are modified to phosphoserine: serine 1037 and serine 1046. Composition is skewed to basic and acidic residues over residues 1062–1071 (QSTRENPKKA) and 1118–1127 (QSKKNNDKPQ). One can recognise a Glutaredoxin domain in the interval 1132–1233 (TSEIRKLNEK…KLRELIYDTI (102 aa)).

This is an uncharacterized protein from Saccharomyces cerevisiae (strain ATCC 204508 / S288c) (Baker's yeast).